Reading from the N-terminus, the 206-residue chain is MLSAQLEAYLAEINLSATAEQKKQLIDFVGMLNKWNKAYNLTSVRDPEAMLVRHIMDSLVVSKHLQGERFIDVGTGPGLPGIPLAIMNPNKTFVLLDSLGKRIRFQKQVAFELGIRNISSVESRVEAYQAEQQFDGVLSRAFASIQDMLSWCHHLPAENGLFYALKGQLNDEELQQMPSGFVIKEIIELKVPKLDEQRHLLKIIKE.

S-adenosyl-L-methionine is bound by residues glycine 74, leucine 79, 125 to 126 (VE), and arginine 140.

It belongs to the methyltransferase superfamily. RNA methyltransferase RsmG family.

The protein localises to the cytoplasm. It carries out the reaction guanosine(527) in 16S rRNA + S-adenosyl-L-methionine = N(7)-methylguanosine(527) in 16S rRNA + S-adenosyl-L-homocysteine. Its function is as follows. Specifically methylates the N7 position of guanine in position 527 of 16S rRNA. The polypeptide is Ribosomal RNA small subunit methyltransferase G (Shewanella putrefaciens (strain CN-32 / ATCC BAA-453)).